A 229-amino-acid chain; its full sequence is Uracil-DNA glycosylase (229 aa).

The active-site Proton acceptor is aspartate 64.

Belongs to the uracil-DNA glycosylase (UDG) superfamily. UNG family.

It is found in the cytoplasm. The enzyme catalyses Hydrolyzes single-stranded DNA or mismatched double-stranded DNA and polynucleotides, releasing free uracil.. Its function is as follows. Excises uracil residues from the DNA which can arise as a result of misincorporation of dUMP residues by DNA polymerase or due to deamination of cytosine. The polypeptide is Uracil-DNA glycosylase (Salmonella choleraesuis (strain SC-B67)).